Reading from the N-terminus, the 210-residue chain is Large ribosomal subunit protein uL15 (210 aa).

2 disordered regions span residues 1-64 (MADD…AAPR) and 76-104 (AAGA…TKGT). Positions 9 to 54 (EAAAKPVAEKATATALAKKAPAKAAAADKAAPAAKGETVAAKPAKA) are enriched in low complexity. A compositionally biased stretch (basic and acidic residues) spans 79-93 (AKKEKTRVGRGEGSK).

Belongs to the universal ribosomal protein uL15 family. As to quaternary structure, part of the 50S ribosomal subunit.

In terms of biological role, binds to the 23S rRNA. The polypeptide is Large ribosomal subunit protein uL15 (Leifsonia xyli subsp. xyli (strain CTCB07)).